A 350-amino-acid polypeptide reads, in one-letter code: Phosphoribosylformylglycinamidine cyclo-ligase (350 aa).

Belongs to the AIR synthase family.

Its subcellular location is the cytoplasm. It catalyses the reaction 2-formamido-N(1)-(5-O-phospho-beta-D-ribosyl)acetamidine + ATP = 5-amino-1-(5-phospho-beta-D-ribosyl)imidazole + ADP + phosphate + H(+). The protein operates within purine metabolism; IMP biosynthesis via de novo pathway; 5-amino-1-(5-phospho-D-ribosyl)imidazole from N(2)-formyl-N(1)-(5-phospho-D-ribosyl)glycinamide: step 2/2. This chain is Phosphoribosylformylglycinamidine cyclo-ligase, found in Syntrophotalea carbinolica (strain DSM 2380 / NBRC 103641 / GraBd1) (Pelobacter carbinolicus).